A 391-amino-acid chain; its full sequence is Glycosyltransferase afumC (391 aa).

Belongs to the afumC glycosyltransferase family.

Its pathway is secondary metabolite biosynthesis. Its activity is regulated as follows. Activity is significantly decreased by addition of divalent cations such as Mg(2+), Mn(2+), Zn(2+), Ca(2+), Co(2+), Cu(2+), and Ni(2+); while Fe(2+) has little effect. Functionally, glycosyltransferase; part of the gene cluster that mediates the biosynthesis fumihopaside A, a hopane-type glucoside that enhances the thermotolerance and UV resistance of N.fumigata. The first step of fumihopaside A biosynthesis is performed by the squalene hopane cyclase afumA that catalyzes the cyclization of 3S-oxidosqualene into the hopene 21-beta-H-hopane-3-beta,22-diol. The cytochrome P450 monooxygenase afumB is responsible for both hydroxylation at C-24 and oxidations at C-30 of the afumA product. The glycosyltransferase afumC then catalyzes the glycosylation at C-24, using UDP-D-glucose as a donor, to produce fumihopaside A. AfumC is also able to accept UDP-D-galactose and UDP-D-glucuronic acid as donors to yield minor derivatives. Fumihopaside B, another minor derivative produced, is different from fumihopaside A due to the presence of a double bond between C-22 and C-29. The chain is Glycosyltransferase afumC from Aspergillus fumigatus (strain CBS 144.89 / FGSC A1163 / CEA10) (Neosartorya fumigata).